The chain runs to 232 residues: Acyl-protein thioesterase 1 (232 aa).

Active-site charge relay system residues include serine 125, aspartate 179, and histidine 212.

It belongs to the AB hydrolase superfamily. AB hydrolase 2 family.

The protein resides in the cytoplasm. It is found in the nucleus. The enzyme catalyses S-hexadecanoyl-L-cysteinyl-[protein] + H2O = L-cysteinyl-[protein] + hexadecanoate + H(+). Its function is as follows. Hydrolyzes fatty acids from S-acylated cysteine residues in proteins with a strong preference for palmitoylated G-alpha proteins over other acyl substrates. Mediates the deacylation of G-alpha proteins such as GPA1 in vivo, but has weak or no activity toward palmitoylated Ras proteins. Has weak lysophospholipase activity in vitro; however such activity may not exist in vivo. This chain is Acyl-protein thioesterase 1, found in Debaryomyces hansenii (strain ATCC 36239 / CBS 767 / BCRC 21394 / JCM 1990 / NBRC 0083 / IGC 2968) (Yeast).